Consider the following 520-residue polypeptide: 2-isopropylmalate synthase (520 aa).

The region spanning 5–268 (VYIFDTTLRD…YTDVNTKEIY (264 aa)) is the Pyruvate carboxyltransferase domain. The Mn(2+) site is built by D14, H202, H204, and N238. The interval 394–520 (KVLHFQVQSG…RQEIREEGTV (127 aa)) is regulatory domain.

The protein belongs to the alpha-IPM synthase/homocitrate synthase family. LeuA type 1 subfamily. In terms of assembly, homodimer. Mn(2+) is required as a cofactor.

The protein resides in the cytoplasm. It carries out the reaction 3-methyl-2-oxobutanoate + acetyl-CoA + H2O = (2S)-2-isopropylmalate + CoA + H(+). Its pathway is amino-acid biosynthesis; L-leucine biosynthesis; L-leucine from 3-methyl-2-oxobutanoate: step 1/4. Functionally, catalyzes the condensation of the acetyl group of acetyl-CoA with 3-methyl-2-oxobutanoate (2-ketoisovalerate) to form 3-carboxy-3-hydroxy-4-methylpentanoate (2-isopropylmalate). The sequence is that of 2-isopropylmalate synthase from Aquifex aeolicus (strain VF5).